The primary structure comprises 61 residues: Sec-independent protein translocase protein TatA (61 aa).

The chain crosses the membrane as a helical span at residues 1-21 (MFGIGMPELIVILVIVLVVFG).

Belongs to the TatA/E family. In terms of assembly, the Tat system comprises two distinct complexes: a TatABC complex, containing multiple copies of TatA, TatB and TatC subunits, and a separate TatA complex, containing only TatA subunits. Substrates initially bind to the TatABC complex, which probably triggers association of the separate TatA complex to form the active translocon.

The protein localises to the cell inner membrane. Functionally, part of the twin-arginine translocation (Tat) system that transports large folded proteins containing a characteristic twin-arginine motif in their signal peptide across membranes. TatA could form the protein-conducting channel of the Tat system. The protein is Sec-independent protein translocase protein TatA of Geobacter metallireducens (strain ATCC 53774 / DSM 7210 / GS-15).